Reading from the N-terminus, the 188-residue chain is HGPRTase-like protein 1 (188 aa).

Belongs to the purine/pyrimidine phosphoribosyltransferase family. Archaeal HPRT subfamily.

Its function is as follows. May catalyze a purine salvage reaction, the substrate is unknown. This Haloferax volcanii (strain ATCC 29605 / DSM 3757 / JCM 8879 / NBRC 14742 / NCIMB 2012 / VKM B-1768 / DS2) (Halobacterium volcanii) protein is HGPRTase-like protein 1.